We begin with the raw amino-acid sequence, 356 residues long: Phosphotriesterase-related protein (356 aa).

Residues histidine 23, histidine 25, glutamate 175, histidine 207, histidine 236, and aspartate 304 each contribute to the a divalent metal cation site.

Belongs to the metallo-dependent hydrolases superfamily. Phosphotriesterase family. A divalent metal cation serves as cofactor.

In Aedes aegypti (Yellowfever mosquito), this protein is Phosphotriesterase-related protein.